Here is a 277-residue protein sequence, read N- to C-terminus: MKRPVDFFAMKENGEKITMITAYDYPSAKNVEQAEADMILVGDSLGMVVLGYDSTVPVTIDDMIHHTKAVKRGATDTFIVTDMPFMTYHGSVNETIQNARKIIQESGAHAVKLEGAGEVVNKIARLTEAGAPVVAHLGLTPQSVGLTGSYKVRAKSAQEAQELMDNALAVEAAGAIAIVLEAIPRQLAEKVSKALSIPTIGIGAGLETDGQVLVYHDIIGYGISRRAKFVKAYADIDETIEPALASYVKEVKAETFPEVKHSFTMAEEDLKGLYGRE.

D43 and D82 together coordinate Mg(2+). 3-methyl-2-oxobutanoate contacts are provided by residues 43–44 (DS), D82, and K112. E114 serves as a coordination point for Mg(2+). Catalysis depends on E181, which acts as the Proton acceptor.

The protein belongs to the PanB family. As to quaternary structure, homodecamer; pentamer of dimers. Mg(2+) serves as cofactor.

The protein localises to the cytoplasm. The enzyme catalyses 3-methyl-2-oxobutanoate + (6R)-5,10-methylene-5,6,7,8-tetrahydrofolate + H2O = 2-dehydropantoate + (6S)-5,6,7,8-tetrahydrofolate. The protein operates within cofactor biosynthesis; (R)-pantothenate biosynthesis; (R)-pantoate from 3-methyl-2-oxobutanoate: step 1/2. Its function is as follows. Catalyzes the reversible reaction in which hydroxymethyl group from 5,10-methylenetetrahydrofolate is transferred onto alpha-ketoisovalerate to form ketopantoate. This Listeria monocytogenes serovar 1/2a (strain ATCC BAA-679 / EGD-e) protein is 3-methyl-2-oxobutanoate hydroxymethyltransferase.